Reading from the N-terminus, the 344-residue chain is Ribosomal RNA large subunit methyltransferase Cfr (344 aa).

The Proton acceptor role is filled by Glu90. In terms of domain architecture, Radical SAM core spans 97–330 (KQGWESFCIS…ATVRTQFGSE (234 aa)). Cysteines 104 and 335 form a disulfide. [4Fe-4S] cluster contacts are provided by Cys111, Cys115, and Cys118. S-adenosyl-L-methionine is bound by residues 157–158 (GE), Ser188, 211–213 (SLH), and Asn292. Cys335 functions as the S-methylcysteine intermediate in the catalytic mechanism.

The protein belongs to the radical SAM superfamily. RlmN family. Cfr subfamily. [4Fe-4S] cluster is required as a cofactor.

Its subcellular location is the cytoplasm. It carries out the reaction adenosine(2503) in 23S rRNA + 2 reduced [2Fe-2S]-[ferredoxin] + 2 S-adenosyl-L-methionine = 8-methyladenosine(2503) in 23S rRNA + 5'-deoxyadenosine + L-methionine + 2 oxidized [2Fe-2S]-[ferredoxin] + S-adenosyl-L-homocysteine. Specifically methylates position 8 of adenine 2503 in 23S rRNA. Confers resistance to some classes of antibiotics. This chain is Ribosomal RNA large subunit methyltransferase Cfr, found in Clostridium botulinum (strain Hall / ATCC 3502 / NCTC 13319 / Type A).